Consider the following 368-residue polypeptide: tRNA-specific 2-thiouridylase MnmA (368 aa).

ATP contacts are provided by residues 11–18 (GMSGGVDS) and Met-37. The interaction with target base in tRNA stretch occupies residues 97-99 (NPD). The active-site Nucleophile is the Cys-102. A disulfide bridge connects residues Cys-102 and Cys-199. Residue Gly-127 coordinates ATP. Positions 149-151 (KDQ) are interaction with tRNA. Residue Cys-199 is the Cysteine persulfide intermediate of the active site. Positions 311–312 (RY) are interaction with tRNA.

Belongs to the MnmA/TRMU family. Interacts with TusE.

It is found in the cytoplasm. The catalysed reaction is S-sulfanyl-L-cysteinyl-[protein] + uridine(34) in tRNA + AH2 + ATP = 2-thiouridine(34) in tRNA + L-cysteinyl-[protein] + A + AMP + diphosphate + H(+). Catalyzes the 2-thiolation of uridine at the wobble position (U34) of tRNA(Lys), tRNA(Glu) and tRNA(Gln), leading to the formation of s(2)U34, the first step of tRNA-mnm(5)s(2)U34 synthesis. Sulfur is provided by IscS, via a sulfur-relay system. Binds ATP and its substrate tRNAs. This is tRNA-specific 2-thiouridylase MnmA from Klebsiella pneumoniae (strain 342).